We begin with the raw amino-acid sequence, 200 residues long: NAD(P)H dehydrogenase (quinone) (200 aa).

The 188-residue stretch at 4 to 191 (VLVLYYSSYG…GGARYQGALV (188 aa)) folds into the Flavodoxin-like domain. FMN-binding positions include 10 to 15 (SSYGHI) and 79 to 81 (TRF). Y12 contributes to the NAD(+) binding site. W99 serves as a coordination point for substrate. FMN contacts are provided by residues 114–120 (STASQHG) and H135.

It belongs to the WrbA family. It depends on FMN as a cofactor.

The catalysed reaction is a quinone + NADH + H(+) = a quinol + NAD(+). It catalyses the reaction a quinone + NADPH + H(+) = a quinol + NADP(+). The sequence is that of NAD(P)H dehydrogenase (quinone) from Rhodospirillum centenum (strain ATCC 51521 / SW).